The chain runs to 123 residues: Proteasome assembly chaperone 4 (123 aa).

The protein belongs to the PSMG4 family. In terms of assembly, interacts with PSMG3. Associates with alpha subunits of the 20S proteasome.

Chaperone protein which promotes assembly of the 20S proteasome. This chain is Proteasome assembly chaperone 4, found in Homo sapiens (Human).